The primary structure comprises 323 residues: Beta-ketoacyl-[acyl-carrier-protein] synthase III (323 aa).

Active-site residues include C113 and H250. The tract at residues 251–255 is ACP-binding; that stretch reads QANLR. N280 is a catalytic residue.

Belongs to the thiolase-like superfamily. FabH family. As to quaternary structure, homodimer.

It is found in the cytoplasm. It carries out the reaction malonyl-[ACP] + acetyl-CoA + H(+) = 3-oxobutanoyl-[ACP] + CO2 + CoA. Its pathway is lipid metabolism; fatty acid biosynthesis. Its function is as follows. Catalyzes the condensation reaction of fatty acid synthesis by the addition to an acyl acceptor of two carbons from malonyl-ACP. Catalyzes the first condensation reaction which initiates fatty acid synthesis and may therefore play a role in governing the total rate of fatty acid production. Possesses both acetoacetyl-ACP synthase and acetyl transacylase activities. Its substrate specificity determines the biosynthesis of branched-chain and/or straight-chain of fatty acids. This is Beta-ketoacyl-[acyl-carrier-protein] synthase III from Paracoccus denitrificans (strain Pd 1222).